A 122-amino-acid polypeptide reads, in one-letter code: Acidic phospholipase A2 5 (122 aa).

Intrachain disulfides connect Cys26/Cys115, Cys28/Cys44, Cys43/Cys95, Cys49/Cys122, Cys50/Cys88, Cys57/Cys81, and Cys75/Cys86. Positions 27, 29, and 31 each coordinate Ca(2+). Residue His47 is part of the active site. Asp48 contributes to the Ca(2+) binding site. Asp89 is a catalytic residue.

This sequence belongs to the phospholipase A2 family. Group II subfamily. D49 sub-subfamily. As to quaternary structure, monomer (predominant). Non-covalently linked homodimers are also observed. It depends on Ca(2+) as a cofactor. As to expression, expressed by the venom gland.

The protein localises to the secreted. It carries out the reaction a 1,2-diacyl-sn-glycero-3-phosphocholine + H2O = a 1-acyl-sn-glycero-3-phosphocholine + a fatty acid + H(+). Preincubation with heparin slightly increase the enzymatic activity. Snake venom phospholipase A2 (PLA2) that inhibits platelet aggregation induced by ADP, arachidonic acid and PAF. Acts in a enzymatic independent manner on a proteinase-activated receptor (PAR1, F2R) to evoke calcium release through the inositol 1,4,5-trisphosphate receptor (ITPR1, IP3R) and induces mouse aorta contraction. PAR1, phospholipase C and IP3R inhibitors suppress PA2-induced aorta contraction. PLA2 catalyzes the calcium-dependent hydrolysis of the 2-acyl groups in 3-sn-phosphoglycerides. The polypeptide is Acidic phospholipase A2 5 (Trimeresurus stejnegeri (Chinese green tree viper)).